A 176-amino-acid polypeptide reads, in one-letter code: Peptide deformylase (176 aa).

2 residues coordinate Fe cation: Cys94 and His136. Glu137 is an active-site residue. His140 is a Fe cation binding site.

This sequence belongs to the polypeptide deformylase family. The cofactor is Fe(2+).

It carries out the reaction N-terminal N-formyl-L-methionyl-[peptide] + H2O = N-terminal L-methionyl-[peptide] + formate. In terms of biological role, removes the formyl group from the N-terminal Met of newly synthesized proteins. Requires at least a dipeptide for an efficient rate of reaction. N-terminal L-methionine is a prerequisite for activity but the enzyme has broad specificity at other positions. This chain is Peptide deformylase, found in Bartonella henselae (strain ATCC 49882 / DSM 28221 / CCUG 30454 / Houston 1) (Rochalimaea henselae).